The following is a 57-amino-acid chain: Somatostatin-2 (57 aa).

The interval Gly-1 to Arg-26 is disordered.

It belongs to the somatostatin family.

The protein localises to the secreted. In terms of biological role, somatostatin inhibits the release of somatotropin. This Piaractus mesopotamicus (Small-scaled pacu) protein is Somatostatin-2 (sst2).